The primary structure comprises 419 residues: Peptide chain release factor subunit 1 (419 aa).

It belongs to the eukaryotic release factor 1 family. Heterodimer of two subunits, one of which binds GTP.

The protein resides in the cytoplasm. In terms of biological role, directs the termination of nascent peptide synthesis (translation) in response to the termination codons UAA, UAG and UGA. This is Peptide chain release factor subunit 1 from Methanococcus vannielii (strain ATCC 35089 / DSM 1224 / JCM 13029 / OCM 148 / SB).